We begin with the raw amino-acid sequence, 512 residues long: tRNA-guanine(15) transglycosylase (512 aa).

Asp85 functions as the Nucleophile in the catalytic mechanism. Asp120 is a binding site for substrate. Cys272, Cys274, and Cys277 together coordinate Zn(2+).

Belongs to the archaeosine tRNA-ribosyltransferase family. Requires Zn(2+) as cofactor.

It catalyses the reaction guanosine(15) in tRNA + 7-cyano-7-deazaguanine = 7-cyano-7-carbaguanosine(15) in tRNA + guanine. It participates in tRNA modification; archaeosine-tRNA biosynthesis. Exchanges the guanine residue with 7-cyano-7-deazaguanine (preQ0) at position 15 in the dihydrouridine loop (D-loop) of archaeal tRNAs. This chain is tRNA-guanine(15) transglycosylase, found in Aeropyrum pernix (strain ATCC 700893 / DSM 11879 / JCM 9820 / NBRC 100138 / K1).